The primary structure comprises 430 residues: tRNA(Ile)-lysidine synthase (430 aa).

21 to 26 (SGGLDS) contributes to the ATP binding site.

Belongs to the tRNA(Ile)-lysidine synthase family.

It is found in the cytoplasm. The catalysed reaction is cytidine(34) in tRNA(Ile2) + L-lysine + ATP = lysidine(34) in tRNA(Ile2) + AMP + diphosphate + H(+). Functionally, ligates lysine onto the cytidine present at position 34 of the AUA codon-specific tRNA(Ile) that contains the anticodon CAU, in an ATP-dependent manner. Cytidine is converted to lysidine, thus changing the amino acid specificity of the tRNA from methionine to isoleucine. The chain is tRNA(Ile)-lysidine synthase from Salmonella paratyphi B (strain ATCC BAA-1250 / SPB7).